The following is a 355-amino-acid chain: Probable dual-specificity RNA methyltransferase RlmN 1 (355 aa).

Glu91 functions as the Proton acceptor in the catalytic mechanism. Positions 99 to 336 (RADRAAGCLS…THLRRSRGPD (238 aa)) constitute a Radical SAM core domain. Cys106 and Cys341 form a disulfide bridge. [4Fe-4S] cluster-binding residues include Cys113, Cys117, and Cys120. S-adenosyl-L-methionine contacts are provided by residues 163-164 (GE), Ser195, 218-220 (SLH), and Asn294. Cys341 serves as the catalytic S-methylcysteine intermediate.

This sequence belongs to the radical SAM superfamily. RlmN family. It depends on [4Fe-4S] cluster as a cofactor.

The protein resides in the cytoplasm. The catalysed reaction is adenosine(2503) in 23S rRNA + 2 reduced [2Fe-2S]-[ferredoxin] + 2 S-adenosyl-L-methionine = 2-methyladenosine(2503) in 23S rRNA + 5'-deoxyadenosine + L-methionine + 2 oxidized [2Fe-2S]-[ferredoxin] + S-adenosyl-L-homocysteine. It catalyses the reaction adenosine(37) in tRNA + 2 reduced [2Fe-2S]-[ferredoxin] + 2 S-adenosyl-L-methionine = 2-methyladenosine(37) in tRNA + 5'-deoxyadenosine + L-methionine + 2 oxidized [2Fe-2S]-[ferredoxin] + S-adenosyl-L-homocysteine. Its function is as follows. Specifically methylates position 2 of adenine 2503 in 23S rRNA and position 2 of adenine 37 in tRNAs. This is Probable dual-specificity RNA methyltransferase RlmN 1 from Opitutus terrae (strain DSM 11246 / JCM 15787 / PB90-1).